Here is a 384-residue protein sequence, read N- to C-terminus: Glucans biosynthesis protein C (384 aa).

10 consecutive transmembrane segments (helical) span residues 17–37 (AWLM…THSW), 54–74 (FIHA…SYML), 91–111 (VGIP…ILLQ), 140–160 (LWFL…FTWF), 173–193 (AISL…YAAI), 212–232 (FIVM…LAFI), 240–260 (FTTP…AYLL), 274–294 (TESV…FSLG), 311–331 (ASLF…AYIT), and 338–358 (LIGF…LYEI).

The protein belongs to the acyltransferase 3 family. OpgC subfamily.

It is found in the cell membrane. It participates in glycan metabolism; osmoregulated periplasmic glucan (OPG) biosynthesis. Functionally, necessary for the succinyl substitution of periplasmic glucans. Could catalyze the transfer of succinyl residues from the cytoplasmic side of the membrane to the nascent glucan backbones on the periplasmic side of the membrane. The chain is Glucans biosynthesis protein C from Salmonella choleraesuis (strain SC-B67).